Consider the following 360-residue polypeptide: Putative agmatine deiminase (360 aa).

Residue C353 is the Amidino-cysteine intermediate of the active site.

This sequence belongs to the agmatine deiminase family.

The catalysed reaction is agmatine + H2O = N-carbamoylputrescine + NH4(+). This chain is Putative agmatine deiminase, found in Vibrio parahaemolyticus serotype O3:K6 (strain RIMD 2210633).